The primary structure comprises 473 residues: MRAGPGPTVTLALVLAVSWAMELKPTAPPIFTGRPFVVAWDVPTQDCGPRLKVPLDLNAFDVQASPNEGFVNQNITIFYRDRLGLYPRFDSAGRSVHGGVPQNVSLWAHRKMLQKRVEHYIRTQESAGLAVIDWEDWRPVWVRNWQDKDVYRRLSRQLVASRHPDWPPDRIVKQAQYEFEFAAQQFMLETLRYVKAVRPRHLWGFYLFPDCYNHDYVQNWESYTGRCPDVEVARNDQLAWLWAESTALFPSVYLDETLASSRHGRNFVSFRVQEALRVARTHHANHALPVYVFTRPTYSRRLTGLSEMDLISTIGESAALGAAGVILWGDAGYTTSTETCQYLKDYLTRLLVPYVVNVSWATQYCSRAQCHGHGRCVRRNPSASTFLHLSTNSFRLVPGHAPGEPQLRPVGELSWADIDHLQTHFRCQCYLGWSGEQCQWDHRQAAGGASEAWAGSHLTSLLALAALAFTWTL.

Residues 1–20 (MRAGPGPTVTLALVLAVSWA) form the signal peptide. Cystine bridges form between Cys47-Cys340 and Cys211-Cys227. N-linked (GlcNAc...) asparagine glycans are attached at residues Asn74 and Asn103. Residue Glu135 is the Proton donor of the active site. N-linked (GlcNAc...) asparagine glycosylation occurs at Asn357. One can recognise an EGF-like domain in the interval 361–439 (ATQYCSRAQC…YLGWSGEQCQ (79 aa)). Intrachain disulfides connect Cys365–Cys376, Cys370–Cys427, and Cys429–Cys438. Gly448 is lipidated: GPI-anchor amidated glycine. Residues 449-473 (ASEAWAGSHLTSLLALAALAFTWTL) constitute a propeptide, removed in mature form.

This sequence belongs to the glycosyl hydrolase 56 family. In terms of assembly, interacts with MST1R. Widely expressed (at protein level).

The protein localises to the cell membrane. The catalysed reaction is Random hydrolysis of (1-&gt;4)-linkages between N-acetyl-beta-D-glucosamine and D-glucuronate residues in hyaluronate.. Functionally, catalyzes hyaluronan degradation into small fragments that are endocytosed and degraded in lysosomes by HYAL1 and exoglycosidases. Essential for the breakdown of extracellular matrix hyaluronan. This is Hyaluronidase-2 (HYAL2) from Homo sapiens (Human).